The following is a 163-amino-acid chain: Ribosome maturation factor RimP (163 aa).

Belongs to the RimP family.

It localises to the cytoplasm. Required for maturation of 30S ribosomal subunits. This Polynucleobacter necessarius subsp. necessarius (strain STIR1) protein is Ribosome maturation factor RimP.